Reading from the N-terminus, the 155-residue chain is Protein archease-like (155 aa).

Ca(2+) contacts are provided by aspartate 26, aspartate 154, and isoleucine 155.

Belongs to the archease family.

Functionally, component of the tRNA-splicing ligase complex required to facilitate the enzymatic turnover of catalytic subunit RtcB (F16A11.2). The protein is Protein archease-like of Caenorhabditis elegans.